The sequence spans 440 residues: Xylose isomerase (440 aa).

Residues histidine 100 and aspartate 103 contribute to the active site. The Mg(2+) site is built by glutamate 231, glutamate 267, histidine 270, aspartate 295, aspartate 306, aspartate 308, and aspartate 338.

It belongs to the xylose isomerase family. Homotetramer. Requires Mg(2+) as cofactor.

The protein localises to the cytoplasm. It carries out the reaction alpha-D-xylose = alpha-D-xylulofuranose. The polypeptide is Xylose isomerase (Burkholderia cenocepacia (strain HI2424)).